Reading from the N-terminus, the 250-residue chain is Ubiquinone/menaquinone biosynthesis C-methyltransferase UbiE (250 aa).

Residues Thr73, Asp94, and 122-123 (DA) each bind S-adenosyl-L-methionine.

It belongs to the class I-like SAM-binding methyltransferase superfamily. MenG/UbiE family.

The enzyme catalyses a 2-demethylmenaquinol + S-adenosyl-L-methionine = a menaquinol + S-adenosyl-L-homocysteine + H(+). The catalysed reaction is a 2-methoxy-6-(all-trans-polyprenyl)benzene-1,4-diol + S-adenosyl-L-methionine = a 5-methoxy-2-methyl-3-(all-trans-polyprenyl)benzene-1,4-diol + S-adenosyl-L-homocysteine + H(+). It participates in quinol/quinone metabolism; menaquinone biosynthesis; menaquinol from 1,4-dihydroxy-2-naphthoate: step 2/2. It functions in the pathway cofactor biosynthesis; ubiquinone biosynthesis. Functionally, methyltransferase required for the conversion of demethylmenaquinol (DMKH2) to menaquinol (MKH2) and the conversion of 2-polyprenyl-6-methoxy-1,4-benzoquinol (DDMQH2) to 2-polyprenyl-3-methyl-6-methoxy-1,4-benzoquinol (DMQH2). The polypeptide is Ubiquinone/menaquinone biosynthesis C-methyltransferase UbiE (Coxiella burnetii (strain RSA 331 / Henzerling II)).